Here is a 402-residue protein sequence, read N- to C-terminus: Secondary metabolism regulator laeA (402 aa).

Residues 1-70 (MSLKYYLNDL…MSPTEVCSTD (70 aa)) form a disordered region. Residues 11–21 (SDSDSESESEC) show a composition bias toward acidic residues.

The protein belongs to the methyltransferase superfamily. LaeA methyltransferase family.

It is found in the nucleus. The catalysed reaction is L-methionyl-[protein] + S-adenosyl-L-methionine = S-methyl-L-methionyl-[protein] + S-adenosyl-L-homocysteine. In terms of biological role, methyltransferase that performs automethylation. No other methyl-accepting substrate has been identified yet. Acts as a global regulator for secondary metabolite gene expression. Negatively regulates the production of coprinoferrin, a structurally novel acylated tripeptide hydroxamate siderophore. The chain is Secondary metabolism regulator laeA from Coprinopsis cinerea (strain Okayama-7 / 130 / ATCC MYA-4618 / FGSC 9003) (Inky cap fungus).